Reading from the N-terminus, the 239-residue chain is tRNA (guanine-N(1)-)-methyltransferase (239 aa).

S-adenosyl-L-methionine contacts are provided by residues G113 and 137–142 (LGDYVL).

It belongs to the RNA methyltransferase TrmD family. As to quaternary structure, homodimer.

The protein localises to the cytoplasm. It carries out the reaction guanosine(37) in tRNA + S-adenosyl-L-methionine = N(1)-methylguanosine(37) in tRNA + S-adenosyl-L-homocysteine + H(+). In terms of biological role, specifically methylates guanosine-37 in various tRNAs. The polypeptide is tRNA (guanine-N(1)-)-methyltransferase (Cutibacterium acnes (strain DSM 16379 / KPA171202) (Propionibacterium acnes)).